Reading from the N-terminus, the 283-residue chain is MLLYTYRSFDMELPTVDIKDADYIILGLPFDGTTSYKPGARFGPVLIRQATLNLESYILDYDIDIAELKIADAGDVALPVSIEDAIKVAVETIKEVRSINPRALPIFLGGEHSMTYPPVKVLEPKSYVVFDAHLDLRDSYQGSRFNHACVARRIHEMGVKVAIFGVRSGTREEVMFASQSGIEWVHARDYNFDAFVDLVSSLPEPVYVSIDVDVFDLPLVPETGTPEPGGLGFWEVIEALEWLTKRKKVAGFDIMEVSGDRLGNSTSITAAKLLFYVIGMSAR.

A divalent metal cation is bound by residues histidine 112, aspartate 131, histidine 133, aspartate 135, aspartate 211, and aspartate 213.

The protein belongs to the arginase family. Agmatinase subfamily. Homotetramer. The cofactor is a divalent metal cation.

The enzyme catalyses agmatine + H2O = urea + putrescine. It functions in the pathway amine and polyamine biosynthesis; putrescine biosynthesis via agmatine pathway; putrescine from agmatine: step 1/1. Inhibited by putrescine. Activity is not affected by arginine and ornithine. In terms of biological role, catalyzes the formation of putrescine from agmatine. Cannot use arginine. The polypeptide is Agmatinase (Pyrococcus horikoshii (strain ATCC 700860 / DSM 12428 / JCM 9974 / NBRC 100139 / OT-3)).